Consider the following 371-residue polypeptide: MALETFVNSEPFTFGVELEIQVVNTHNYDLTKAASDLMRLIQGETFPGNITPEITESMIELSTGICHSHEQAVSELHAIRDVLVKAADQLNVGLAGGGTHAFQQWSDRQIYDAPRFQYISELYGYLAKQFTVFGQHVHIGCPDPDSALFLLHSMSRFIPHFIALSASSPFVQNVDTGFHSARLNSVFAFPLSGRAPFVLTWDSFEEYFTKMVNTGVVNSMKDFYWDIRPKPGYGTIEVRVMDTPLSVDRAAAIACYIQTLARYLLTDRPLKLSEDDYLVYTFNRFEACRFGLEGTCVNPQTGERRTIAEDILDTLDRIAPHAAALGSRAALDEIGALANARVNDASWLRTVFKQEKSLNETVRQQCLRWRE.

It belongs to the glutamate--cysteine ligase type 2 family. YbdK subfamily.

It carries out the reaction L-cysteine + L-glutamate + ATP = gamma-L-glutamyl-L-cysteine + ADP + phosphate + H(+). In terms of biological role, ATP-dependent carboxylate-amine ligase which exhibits weak glutamate--cysteine ligase activity. The chain is Putative glutamate--cysteine ligase 2 from Burkholderia lata (strain ATCC 17760 / DSM 23089 / LMG 22485 / NCIMB 9086 / R18194 / 383).